The chain runs to 1843 residues: Xin actin-binding repeat-containing protein 1 (1843 aa).

The span at 1–10 (MADTQTQVAP) shows a compositional bias: polar residues. The segment at 1 to 48 (MADTQTQVAPTPTMRMATAEDLPLPPPPALEDLPLPPPKESFSKFHQQ) is disordered. The tract at residues 1–54 (MADTQTQVAPTPTMRMATAEDLPLPPPPALEDLPLPPPKESFSKFHQQRQASEL) is interaction with VASP. The segment covering 23 to 39 (PLPPPPALEDLPLPPPK) has biased composition (pro residues). Xin repeat units follow at residues 89–104 (GDVQCMRWIFENWRLD), 121–136 (GDVQATSRKFEEGSFA), 151–166 (GDVRAARWLFETKPLD), and 186–201 (GDVQGTRMLFETRPLD). The interval 132-151 (EGSFANSTDQEPTRPQPGGG) is disordered. Residues Ser205, Ser208, and Ser213 each carry the phosphoserine modification. Xin repeat units follow at residues 226–241 (GDVKKTVKLFQTEPLC) and 264–279 (NAVRSARWLFETRPLD). The residue at position 295 (Ser295) is a Phosphoserine. Residues 302 to 317 (PDVSATRWIFETQPLD) form a Xin 7 repeat. At Ser332 the chain carries Phosphoserine. Xin repeat units lie at residues 340 to 355 (PDVQQQQHLFETRALD) and 376 to 391 (GDVRSTLWLFETKPLD). Residues 406 to 432 (DPQDGEGHLSSDSSSALPFSQSAPQRD) form a disordered region. The span at 415 to 429 (SSDSSSALPFSQSAP) shows a compositional bias: low complexity. The Xin 10 repeat unit spans residues 436–451 (GDVKTFKNLFETLPLD). Residues 455–479 (QGEVLAHGSPSREEGTDSAGQAQGI) form a disordered region. Xin repeat units lie at residues 507-522 (GDVQGYRWMFETQPLD) and 545-560 (GDVGTARWLFETQPLE). An interaction with CTNNB1 region spans residues 531-632 (IDVVRGITRQ…AQSCTWMFKP (102 aa)). The span at 564–577 (QREQQERQKEEGKS) shows a compositional bias: basic and acidic residues. A disordered region spans residues 564-591 (QREQQERQKEEGKSQGDPQPEAPPKGDV). 5 Xin repeats span residues 589–604 (GDVQTIRWLFETCPMS), 621–636 (AEAQSCTWMFKPQPVD), 654–669 (GERQTDRHVFETEPLQ), 691–706 (GQVSRQKEVFQALEAG), and 723–738 (GSVHKFTWLFENCPMG). Disordered regions lie at residues 943–999 (SLRW…QAIG), 1063–1205 (AEAQ…MAWG), 1238–1277 (SGPQAAGASPHPHNAFVPPPPTLPAAVTGPDFPAGAHRAE), 1289–1471 (DPLL…QKEL), and 1561–1696 (MSSL…DVSV). Composition is skewed to polar residues over residues 1064–1073 (EAQSLHQQVL) and 1080–1089 (PTPTATSNPI). Positions 1294 to 1311 (SHSSPAGQRTPGGSQTKT) are enriched in polar residues. The span at 1357-1368 (GQREHQRGERDT) shows a compositional bias: basic and acidic residues. Polar residues predominate over residues 1393 to 1424 (GHSQPSLQHGLSTTAPRPTKNQATGSNAQSSE). The stretch at 1462-1490 (DSLQRNQKELQGLLNQVQALEKEAASSVD) forms a coiled coil. Polar residues-rich tracts occupy residues 1588-1600 (VTVSSSARPSGSG) and 1663-1679 (SRDSPSSPTFISIQSAT). Residues 1685 to 1843 (TPSFKGNPDV…SCSYSQPAAQ (159 aa)) are interaction with FLNC.

Belongs to the Xin family. As to quaternary structure, interacts (via N-terminus) with CTTN; the interaction promotes CTTN localization to intercalated disks in cardiomyocytes. Interacts with CTNNB1. Interacts with FLNC and VASP. Interacts with F-actin. As to expression, expressed in skeletal muscle at areas of Z-disk disruption in a longitudinal pattern spanning one or more sarcomeres (at protein level). In terms of tissue distribution, expressed in the heart (at protein level). Expressed in the heart.

The protein localises to the cell junction. It localises to the adherens junction. The protein resides in the desmosome. Its function is as follows. Protects actin filaments from depolymerization. Required for correct cardiac intercalated disk ultrastructure via maintenance of cell-cell adhesion stability, and as a result maintains cardiac organ morphology, conductance and heart beat rhythm. Required for development of normal skeletal muscle morphology and muscle fiber type composition. Plays a role in regulating muscle satellite cell activation and survival, as a result promotes muscle fiber recovery from injury and fatigue. In Homo sapiens (Human), this protein is Xin actin-binding repeat-containing protein 1.